The primary structure comprises 197 residues: Holliday junction branch migration complex subunit RuvA (197 aa).

The domain I stretch occupies residues Met1 to Leu63. The domain II stretch occupies residues Thr64–Pro142. Positions Pro142–Glu146 are flexible linker. A domain III region spans residues Thr147–Arg197.

This sequence belongs to the RuvA family. In terms of assembly, homotetramer. Forms an RuvA(8)-RuvB(12)-Holliday junction (HJ) complex. HJ DNA is sandwiched between 2 RuvA tetramers; dsDNA enters through RuvA and exits via RuvB. An RuvB hexamer assembles on each DNA strand where it exits the tetramer. Each RuvB hexamer is contacted by two RuvA subunits (via domain III) on 2 adjacent RuvB subunits; this complex drives branch migration. In the full resolvosome a probable DNA-RuvA(4)-RuvB(12)-RuvC(2) complex forms which resolves the HJ.

The protein localises to the cytoplasm. Its function is as follows. The RuvA-RuvB-RuvC complex processes Holliday junction (HJ) DNA during genetic recombination and DNA repair, while the RuvA-RuvB complex plays an important role in the rescue of blocked DNA replication forks via replication fork reversal (RFR). RuvA specifically binds to HJ cruciform DNA, conferring on it an open structure. The RuvB hexamer acts as an ATP-dependent pump, pulling dsDNA into and through the RuvAB complex. HJ branch migration allows RuvC to scan DNA until it finds its consensus sequence, where it cleaves and resolves the cruciform DNA. This Syntrophotalea carbinolica (strain DSM 2380 / NBRC 103641 / GraBd1) (Pelobacter carbinolicus) protein is Holliday junction branch migration complex subunit RuvA.